The following is a 75-amino-acid chain: Small ribosomal subunit protein bS21B (75 aa).

Basic and acidic residues predominate over residues 33 to 52; it reads RRSYEKPSERRAREKAEAVR. The interval 33-75 is disordered; the sequence is RRSYEKPSERRAREKAEAVRRARKLARKQAQREGLLPGKKRAA.

Belongs to the bacterial ribosomal protein bS21 family.

The protein is Small ribosomal subunit protein bS21B of Chelativorans sp. (strain BNC1).